The primary structure comprises 266 residues: Glucosamine-6-phosphate deaminase (266 aa).

Aspartate 72 (proton acceptor; for enolization step) is an active-site residue. Catalysis depends on aspartate 141, which acts as the For ring-opening step. Catalysis depends on histidine 143, which acts as the Proton acceptor; for ring-opening step. Catalysis depends on glutamate 148, which acts as the For ring-opening step.

The protein belongs to the glucosamine/galactosamine-6-phosphate isomerase family. NagB subfamily. As to quaternary structure, homohexamer.

It catalyses the reaction alpha-D-glucosamine 6-phosphate + H2O = beta-D-fructose 6-phosphate + NH4(+). Its pathway is amino-sugar metabolism; N-acetylneuraminate degradation; D-fructose 6-phosphate from N-acetylneuraminate: step 5/5. Its activity is regulated as follows. Allosterically activated by N-acetylglucosamine 6-phosphate (GlcNAc6P). Catalyzes the reversible isomerization-deamination of glucosamine 6-phosphate (GlcN6P) to form fructose 6-phosphate (Fru6P) and ammonium ion. The protein is Glucosamine-6-phosphate deaminase of Aliivibrio salmonicida (strain LFI1238) (Vibrio salmonicida (strain LFI1238)).